Consider the following 256-residue polypeptide: GTP cyclohydrolase FolE2 (256 aa).

This sequence belongs to the GTP cyclohydrolase IV family.

It catalyses the reaction GTP + H2O = 7,8-dihydroneopterin 3'-triphosphate + formate + H(+). Its pathway is cofactor biosynthesis; 7,8-dihydroneopterin triphosphate biosynthesis; 7,8-dihydroneopterin triphosphate from GTP: step 1/1. Its function is as follows. Converts GTP to 7,8-dihydroneopterin triphosphate. This chain is GTP cyclohydrolase FolE2, found in Caldicellulosiruptor saccharolyticus (strain ATCC 43494 / DSM 8903 / Tp8T 6331).